Reading from the N-terminus, the 306-residue chain is Curved DNA-binding protein (306 aa).

Residues 5-69 (DYYAIMGVKP…QRRAEYDQMW (65 aa)) form the J domain.

Its subcellular location is the cytoplasm. It localises to the nucleoid. DNA-binding protein that preferentially recognizes a curved DNA sequence. It is probably a functional analog of DnaJ; displays overlapping activities with DnaJ, but functions under different conditions, probably acting as a molecular chaperone in an adaptive response to environmental stresses other than heat shock. Lacks autonomous chaperone activity; binds native substrates and targets them for recognition by DnaK. Its activity is inhibited by the binding of CbpM. This Escherichia fergusonii (strain ATCC 35469 / DSM 13698 / CCUG 18766 / IAM 14443 / JCM 21226 / LMG 7866 / NBRC 102419 / NCTC 12128 / CDC 0568-73) protein is Curved DNA-binding protein.